Consider the following 571-residue polypeptide: Germacrene B synthase TPS16CC (571 aa).

(2E,6E)-farnesyl diphosphate-binding residues include arginine 287, aspartate 324, aspartate 328, arginine 465, and aspartate 468. 2 residues coordinate Mg(2+): aspartate 324 and aspartate 328. Residues 324–328 (DDIYD) carry the DDXXD motif motif. The Mg(2+) site is built by aspartate 468, serine 472, and glutamate 476.

The protein belongs to the terpene synthase family. Tpsb subfamily. Requires Mg(2+) as cofactor. Mn(2+) is required as a cofactor. Highly expressed in glandular trichomes.

It carries out the reaction (2E,6E)-farnesyl diphosphate = (1E,4E)-germacrene B + diphosphate. The protein operates within secondary metabolite biosynthesis; terpenoid biosynthesis. In terms of biological role, involved in sesquiterpene olefins biosynthesis, constituants of cannabinoids and terpenoids-rich resins. Catalyzes mainly the conversion of (2E)-farnesyl diphosphate to germacrene B, which is spontaneously converted to gamma-elemene as a thermal degradation product. This is Germacrene B synthase TPS16CC from Cannabis sativa (Hemp).